The chain runs to 269 residues: Formamidopyrimidine-DNA glycosylase (269 aa).

The Schiff-base intermediate with DNA role is filled by proline 2. The Proton donor role is filled by glutamate 3. The active-site Proton donor; for beta-elimination activity is the lysine 57. DNA contacts are provided by histidine 90, arginine 109, and lysine 150. The segment at 235–269 (QVYGRKGEPCRVCGTPIVATKHAQRATFYCRHCQK) adopts an FPG-type zinc-finger fold. Catalysis depends on arginine 259, which acts as the Proton donor; for delta-elimination activity.

The protein belongs to the FPG family. In terms of assembly, monomer. It depends on Zn(2+) as a cofactor.

The enzyme catalyses Hydrolysis of DNA containing ring-opened 7-methylguanine residues, releasing 2,6-diamino-4-hydroxy-5-(N-methyl)formamidopyrimidine.. The catalysed reaction is 2'-deoxyribonucleotide-(2'-deoxyribose 5'-phosphate)-2'-deoxyribonucleotide-DNA = a 3'-end 2'-deoxyribonucleotide-(2,3-dehydro-2,3-deoxyribose 5'-phosphate)-DNA + a 5'-end 5'-phospho-2'-deoxyribonucleoside-DNA + H(+). Involved in base excision repair of DNA damaged by oxidation or by mutagenic agents. Acts as a DNA glycosylase that recognizes and removes damaged bases. Has a preference for oxidized purines, such as 7,8-dihydro-8-oxoguanine (8-oxoG). Has AP (apurinic/apyrimidinic) lyase activity and introduces nicks in the DNA strand. Cleaves the DNA backbone by beta-delta elimination to generate a single-strand break at the site of the removed base with both 3'- and 5'-phosphates. This chain is Formamidopyrimidine-DNA glycosylase, found in Salmonella dublin (strain CT_02021853).